Here is a 466-residue protein sequence, read N- to C-terminus: Argininosuccinate lyase (466 aa).

Belongs to the lyase 1 family. Argininosuccinate lyase subfamily.

It is found in the cytoplasm. The catalysed reaction is 2-(N(omega)-L-arginino)succinate = fumarate + L-arginine. It functions in the pathway amino-acid biosynthesis; L-arginine biosynthesis; L-arginine from L-ornithine and carbamoyl phosphate: step 3/3. In Bartonella bacilliformis (strain ATCC 35685 / KC583 / Herrer 020/F12,63), this protein is Argininosuccinate lyase.